A 271-amino-acid chain; its full sequence is Autophagy-related protein 27 (271 aa).

Positions 1 to 19 (MVSKTWICGFISIITVVQA) are cleaved as a signal peptide. In terms of domain architecture, MRH spans 20–166 (LSCEKHDVLK…TLKGPSGCLK (147 aa)). Residues 20 to 197 (LSCEKHDVLK…KKPAKKAGGT (178 aa)) lie on the Lumenal side of the membrane. Cystine bridges form between cysteine 22–cysteine 60, cysteine 71–cysteine 78, and cysteine 135–cysteine 164. The tract at residues 161–190 (PSGCLKSKDDDKKNGDGDNGKDGDNEGKKP) is disordered. A compositionally biased stretch (basic and acidic residues) spans 166 to 189 (KSKDDDKKNGDGDNGKDGDNEGKK). The helical transmembrane segment at 198–218 (LWFTWLFLYALLFTLIYLMVV) threads the bilayer. Residues 219 to 271 (SFLNTRGGSFQDFRAEFIQRSTQFLTSLPEFCREVVSRILGRSTAQRGGYSAV) are Cytoplasmic-facing.

Belongs to the ATG27 family. Forms a complex with ATG9 and ATG23.

The protein localises to the cytoplasmic vesicle membrane. The protein resides in the golgi apparatus membrane. It is found in the mitochondrion membrane. Its subcellular location is the preautophagosomal structure membrane. Its function is as follows. Effector of VPS34 phosphatidylinositol 3-phosphate kinase signaling. Regulates the cytoplasm to vacuole transport (Cvt) vesicle formation. Plays a role in ATG protein retrieval from the pre-autophagosomal structure (PAS) and is especially required for autophagy-dependent cycling of ATG9. The protein is Autophagy-related protein 27 (ATG27) of Saccharomyces cerevisiae (strain YJM789) (Baker's yeast).